Here is a 916-residue protein sequence, read N- to C-terminus: Probable dipeptidyl-aminopeptidase B (916 aa).

2 disordered regions span residues 1–35 (MGRT…SGLS) and 67–86 (DAEA…KLGS). Topologically, residues 1 to 92 (MGRTGDLENA…KLGSGSRTRQ (92 aa)) are cytoplasmic. Positions 21-35 (TSGTSSRSSTDSGLS) are enriched in low complexity. A helical; Signal-anchor for type II membrane protein membrane pass occupies residues 93–113 (IFWALVILCLGGWVLALVLFL). The Vacuolar segment spans residues 114-916 (THGRASSQTA…VKRSVPAFAH (803 aa)). Asn-349 and Asn-640 each carry an N-linked (GlcNAc...) asparagine glycan. Ser-754 serves as the catalytic Charge relay system. Residues Asn-808 and Asn-813 are each glycosylated (N-linked (GlcNAc...) asparagine). Active-site charge relay system residues include Asp-831 and His-864.

This sequence belongs to the peptidase S9B family.

It localises to the vacuole membrane. It catalyses the reaction Release of an N-terminal dipeptide, Xaa-Yaa-|-Zaa-, from a polypeptide, preferentially when Yaa is Pro, provided Zaa is neither Pro nor hydroxyproline.. Type IV dipeptidyl-peptidase which removes N-terminal dipeptides sequentially from polypeptides having unsubstituted N-termini provided that the penultimate residue is proline. The protein is Probable dipeptidyl-aminopeptidase B (dapB) of Aspergillus flavus (strain ATCC 200026 / FGSC A1120 / IAM 13836 / NRRL 3357 / JCM 12722 / SRRC 167).